We begin with the raw amino-acid sequence, 328 residues long: Flotillin-like protein FloA (328 aa).

2 helical membrane passes run 9–29 (LLIT…VPVG) and 30–50 (LWIS…IGMR).

The protein belongs to the flotillin-like FloA family. Homooligomerizes.

It localises to the cell membrane. Its subcellular location is the membrane raft. Its function is as follows. Found in functional membrane microdomains (FMM) that may be equivalent to eukaryotic membrane rafts. FMMs are highly dynamic and increase in number as cells age. Flotillins are thought to be important factors in membrane fluidity. This chain is Flotillin-like protein FloA, found in Exiguobacterium sp. (strain ATCC BAA-1283 / AT1b).